The following is a 119-amino-acid chain: NADH-quinone oxidoreductase subunit A (119 aa).

The next 3 membrane-spanning stretches (helical) occupy residues 9–29 (IFLF…LGYI), 63–83 (LVAI…PWAV), and 88–108 (IGAL…VGFI).

It belongs to the complex I subunit 3 family. In terms of assembly, NDH-1 is composed of 14 different subunits. Subunits NuoA, H, J, K, L, M, N constitute the membrane sector of the complex.

It is found in the cell inner membrane. It carries out the reaction a quinone + NADH + 5 H(+)(in) = a quinol + NAD(+) + 4 H(+)(out). Functionally, NDH-1 shuttles electrons from NADH, via FMN and iron-sulfur (Fe-S) centers, to quinones in the respiratory chain. The immediate electron acceptor for the enzyme in this species is believed to be ubiquinone. Couples the redox reaction to proton translocation (for every two electrons transferred, four hydrogen ions are translocated across the cytoplasmic membrane), and thus conserves the redox energy in a proton gradient. The polypeptide is NADH-quinone oxidoreductase subunit A (Albidiferax ferrireducens (strain ATCC BAA-621 / DSM 15236 / T118) (Rhodoferax ferrireducens)).